A 673-amino-acid chain; its full sequence is DNA ligase (673 aa).

Residues 33–37 (DYEYD), 82–83 (SL), and Glu113 contribute to the NAD(+) site. The active-site N6-AMP-lysine intermediate is the Lys115. NAD(+) is bound by residues Arg136, Glu170, Lys285, and Lys309. 4 residues coordinate Zn(2+): Cys403, Cys406, Cys421, and Cys426. In terms of domain architecture, BRCT spans 583 to 672 (AKSDILKGYT…SHEEVEKILM (90 aa)).

It belongs to the NAD-dependent DNA ligase family. LigA subfamily. Requires Mg(2+) as cofactor. It depends on Mn(2+) as a cofactor.

It catalyses the reaction NAD(+) + (deoxyribonucleotide)n-3'-hydroxyl + 5'-phospho-(deoxyribonucleotide)m = (deoxyribonucleotide)n+m + AMP + beta-nicotinamide D-nucleotide.. DNA ligase that catalyzes the formation of phosphodiester linkages between 5'-phosphoryl and 3'-hydroxyl groups in double-stranded DNA using NAD as a coenzyme and as the energy source for the reaction. It is essential for DNA replication and repair of damaged DNA. This is DNA ligase from Caldicellulosiruptor saccharolyticus (strain ATCC 43494 / DSM 8903 / Tp8T 6331).